We begin with the raw amino-acid sequence, 520 residues long: Sensory neuron membrane protein 1 (520 aa).

Over 1 to 5 (MKPKK) the chain is Cytoplasmic. Residues 6–26 (LGIIGGSLLAFGILICAIAFP) traverse the membrane as a helical segment. At 27–451 (PFLRSQVKKQ…KLKTVFKTIS (425 aa)) the chain is on the extracellular side. Residues Asn64, Asn224, and Asn268 are each glycosylated (N-linked (GlcNAc...) asparagine). Cystine bridges form between Cys264-Cys329, Cys293-Cys348, and Cys331-Cys337. The chain crosses the membrane as a helical span at residues 452–472 (IVGFMKWFTIVSGTCVSGAAA). Residues 473–520 (ALFFKNKDKNKLDITKVTPQKGEEKKWPNQMTISTIQSAAVPPNLDAD) lie on the Cytoplasmic side of the membrane.

Belongs to the CD36 family.

It localises to the cell membrane. Its function is as follows. Plays an olfactory role that is not restricted to pheromone sensitivity. This Apis mellifera (Honeybee) protein is Sensory neuron membrane protein 1.